A 1048-amino-acid polypeptide reads, in one-letter code: Bifunctional heparan sulfate N-deacetylase/N-sulfotransferase (1048 aa).

The Cytoplasmic segment spans residues 1-172; it reads MTISGGNQHN…RRCFGINVRR (172 aa). Residues 173–192 form a helical; Signal-anchor for type II membrane protein membrane-spanning segment; sequence CVLALLAITMVSIFYYTHYV. The heparan sulfate N-deacetylase stretch occupies residues 192–752; it reads VDTGVFNGLI…VRHKKIWSKT (561 aa). Residues 193–1048 lie on the Lumenal side of the membrane; that stretch reads DTGVFNGLIQ…WLKDDLSTGT (856 aa). Residues Asn-388 and Asn-555 are each glycosylated (N-linked (GlcNAc...) asparagine). The heparan sulfate N-sulfotransferase stretch occupies residues 753 to 1048; the sequence is KNCDSLPKFL…WLKDDLSTGT (296 aa). Lys-768 acts as the For sulfotransferase activity in catalysis. Residue 768 to 772 coordinates 3'-phosphoadenylyl sulfate; it reads KTGTT. The N-linked (GlcNAc...) asparagine glycan is linked to Asn-823. Ser-877 contributes to the 3'-phosphoadenylyl sulfate binding site. A glycan (N-linked (GlcNAc...) asparagine) is linked at Asn-892. A disulfide bridge links Cys-983 with Cys-993. 998 to 1002 lines the 3'-phosphoadenylyl sulfate pocket; it reads KGRQY.

This sequence belongs to the sulfotransferase 1 family. NDST subfamily. Monomer.

It is found in the golgi apparatus membrane. The enzyme catalyses alpha-D-glucosaminyl-[heparan sulfate](n) + 3'-phosphoadenylyl sulfate = N-sulfo-alpha-D-glucosaminyl-[heparan sulfate](n) + adenosine 3',5'-bisphosphate + 2 H(+). It functions in the pathway glycan metabolism; heparan sulfate biosynthesis. The protein operates within glycan metabolism; heparin biosynthesis. In terms of biological role, essential bifunctional enzyme that catalyzes both the N-deacetylation and the N-sulfation of glucosamine (GlcNAc) of the glycosaminoglycan in heparan sulfate. Modifies the GlcNAc-GlcA disaccharide repeating sugar backbone to make N-sulfated heparosan, a prerequisite substrate for later modifications in heparin biosynthesis. Plays a role in diffusion of morphogen wingless (wg) via its role in heparan sulfate proteoglycans (HSPGs) biosynthesis, HSPGs being required for movement of wg morphogens. Required for wg signaling during both embryonic and imaginal disk development. Also required for FGF receptor signaling. The polypeptide is Bifunctional heparan sulfate N-deacetylase/N-sulfotransferase (sfl) (Drosophila melanogaster (Fruit fly)).